The primary structure comprises 378 residues: MKTTILLLVVLTIVQLSKAKDNLQFVFVTAKGQDHQACNYPQGPKITNIEEPDSELTEDGKKEAYEFGQKLSSEYKSRLGVTKWDSAQNYWAIAAIEKRTKKATLITAGVIAKRQSVTSKTWSDEELQKTSFPALNDFFRFINPQHCPKYIKSILSKQNDINTILGKCEAALKTVKEHYPAVNKPQHTWLVYETFKRMKQQKASNLEWLTDDIMKQLQACSAEITWFAATNSDEWRKISGGLLLTDIFTDLDQITQGKPQPYAPGGANNKMSLFTVPQVLVISHLAVITPPGTKIGSKDVTAQNIYPEDGAYVNLELFKGDKEDWKVKIVYVKGKGEPQQTIALPGCPEKCPYNKFKQILQQYAISDDDHKKACGFPA.

Residues 1–19 form the signal peptide; the sequence is MKTTILLLVVLTIVQLSKA. Intrachain disulfides connect Cys-147-Cys-374, Cys-168-Cys-220, and Cys-347-Cys-351.

The protein belongs to the histidine acid phosphatase family.

Its subcellular location is the secreted. In terms of biological role, probably modulates blood feeding of fleas on vertebrate species by binding and sequestering different mediators involved in the host response. Binds histamine. Binds leukotriene B4, leukotriene C4, leukotriene D4 and leukotriene E4. Does not bind serotonin, adrenaline, noradrenaline, ADP, and stable analogs of thromboxane A2: U-46619 and cTXA2. This Xenopsylla cheopis (Oriental rat flea) protein is Acid phosphatase-like protein XcAP-2.